Here is an 85-residue protein sequence, read N- to C-terminus: U4-theraphotoxin-Hhn1h (85 aa).

A signal peptide spans 1–22 (MKVTLIAILTCAAVLVLHTTAA). Residues 23–48 (EELEAESQLMEVGMPDTELAAVDEER) constitute a propeptide that is removed on maturation. Disulfide bonds link Cys52/Cys66, Cys56/Cys77, and Cys71/Cys82.

Belongs to the neurotoxin 12 (Hwtx-2) family. 02 (Hwtx-2) subfamily. Expressed by the venom gland.

It localises to the secreted. Its function is as follows. Postsynaptic neurotoxin. In Cyriopagopus hainanus (Chinese bird spider), this protein is U4-theraphotoxin-Hhn1h.